The chain runs to 574 residues: MLRMFNTSLVASKLMWVIFTGMLAPTLYMVHCNSTLLLEWNLFSISSTPMMMTIILDPLGLMFSCTVVMISANILKFSTIYMKEDKFINRFTVLVLLFVLSMNMLIFFPHLIILLLGWDGLGIVSFILVIYYQNPKSLAAGMITALTNRIGDVMLLLAIAWTLNQGHWNILHMWAVDENMYQALVIIIAAMTKSAQMPFSSWLPAAMAAPTPVSALVHSSTLVTAGVFLLIRFYNFLSSVWWFTTFLLFVAVSTTLMAGLSASSECDMKKIIALSTLSQLGMMMAAMGLGMAHMAFFHMVTHAMFKALLFVCAGSFIHSHMHSQDLRWMGNLTKQMPTTTSCLIMANLALCGFPFMSGFYSKDMIVEASLYYPHNSLMINLILFAVGLTAFYSTRFTMCVVLSPNNCGPYMHLEESNSLTSPMLLLASMSVISGSALTWILPLKQEMMMIPLDQKLKTLMLVTLGALMSWFFLTTTNMTKTCLYIRHPIINYFSCTMWFLVPLSSQFMMKLPMYVSHNYLKLTDQSWLELLGGQGINNVSSKASNIYLASLKSTPMNYLMMSSMLLLVATLVAI.

Transmembrane regions (helical) follow at residues 10–30, 50–70, 87–107, 111–131, 141–161, 181–203, 211–231, 240–260, 280–300, 301–321, 340–360, 381–401, 423–443, 458–478, 489–509, and 554–574; these read VASK…LYMV, MMMT…VVMI, FINR…MLIF, LIIL…LVIY, GMIT…AIAW, YQAL…SSWL, TPVS…FLLI, VWWF…MAGL, LGMM…FHMV, THAM…HSHM, TSCL…SGFY, LILF…MCVV, MLLL…ILPL, TLML…TTNM, IINY…QFMM, and TPMN…LVAI.

This sequence belongs to the complex I subunit 5 family.

The protein resides in the mitochondrion inner membrane. It catalyses the reaction a ubiquinone + NADH + 5 H(+)(in) = a ubiquinol + NAD(+) + 4 H(+)(out). Functionally, core subunit of the mitochondrial membrane respiratory chain NADH dehydrogenase (Complex I) that is believed to belong to the minimal assembly required for catalysis. Complex I functions in the transfer of electrons from NADH to the respiratory chain. The immediate electron acceptor for the enzyme is believed to be ubiquinone. The chain is NADH-ubiquinone oxidoreductase chain 5 (ND5) from Lumbricus terrestris (Common earthworm).